Consider the following 708-residue polypeptide: Elongation factor G (708 aa).

Residues Lys-8 to Met-290 enclose the tr-type G domain. GTP is bound by residues Ala-17–Thr-24, Asp-88–His-92, and Asn-142–Asp-145.

This sequence belongs to the TRAFAC class translation factor GTPase superfamily. Classic translation factor GTPase family. EF-G/EF-2 subfamily.

Its subcellular location is the cytoplasm. Catalyzes the GTP-dependent ribosomal translocation step during translation elongation. During this step, the ribosome changes from the pre-translocational (PRE) to the post-translocational (POST) state as the newly formed A-site-bound peptidyl-tRNA and P-site-bound deacylated tRNA move to the P and E sites, respectively. Catalyzes the coordinated movement of the two tRNA molecules, the mRNA and conformational changes in the ribosome. The chain is Elongation factor G from Psychrobacter cryohalolentis (strain ATCC BAA-1226 / DSM 17306 / VKM B-2378 / K5).